The sequence spans 295 residues: Methionine aminopeptidase (295 aa).

H62 is a substrate binding site. A divalent metal cation contacts are provided by D82, D93, and H153. Residue H161 coordinates substrate. The a divalent metal cation site is built by E187 and E280.

This sequence belongs to the peptidase M24A family. Methionine aminopeptidase archaeal type 2 subfamily. Monomer. Co(2+) is required as a cofactor. Zn(2+) serves as cofactor. The cofactor is Mn(2+). It depends on Fe(2+) as a cofactor.

It catalyses the reaction Release of N-terminal amino acids, preferentially methionine, from peptides and arylamides.. Removes the N-terminal methionine from nascent proteins. The N-terminal methionine is often cleaved when the second residue in the primary sequence is small and uncharged (Met-Ala-, Cys, Gly, Pro, Ser, Thr, or Val). This chain is Methionine aminopeptidase, found in Pyrococcus horikoshii (strain ATCC 700860 / DSM 12428 / JCM 9974 / NBRC 100139 / OT-3).